Here is a 637-residue protein sequence, read N- to C-terminus: 1-deoxy-D-xylulose-5-phosphate synthase (637 aa).

Residues H73 and 113 to 115 (SHA) each bind thiamine diphosphate. D145 is a Mg(2+) binding site. Thiamine diphosphate contacts are provided by residues 146-147 (GA), N175, Y286, and E367. N175 is a Mg(2+) binding site.

It belongs to the transketolase family. DXPS subfamily. Homodimer. Requires Mg(2+) as cofactor. It depends on thiamine diphosphate as a cofactor.

The enzyme catalyses D-glyceraldehyde 3-phosphate + pyruvate + H(+) = 1-deoxy-D-xylulose 5-phosphate + CO2. Its pathway is metabolic intermediate biosynthesis; 1-deoxy-D-xylulose 5-phosphate biosynthesis; 1-deoxy-D-xylulose 5-phosphate from D-glyceraldehyde 3-phosphate and pyruvate: step 1/1. Its function is as follows. Catalyzes the acyloin condensation reaction between C atoms 2 and 3 of pyruvate and glyceraldehyde 3-phosphate to yield 1-deoxy-D-xylulose-5-phosphate (DXP). The polypeptide is 1-deoxy-D-xylulose-5-phosphate synthase (Thermobifida fusca (strain YX)).